The following is a 242-amino-acid chain: ATP-dependent dethiobiotin synthetase BioD (242 aa).

ATP is bound at residue aspartate 15–valine 20. Position 19 (threonine 19) interacts with Mg(2+). Lysine 40 is a catalytic residue. Serine 44 is a binding site for substrate. Glutamate 117 serves as a coordination point for Mg(2+). Residues glutamate 117 to glycine 120, asparagine 178 to glutamine 179, and proline 208 to serine 210 contribute to the ATP site.

This sequence belongs to the dethiobiotin synthetase family. In terms of assembly, homodimer. It depends on Mg(2+) as a cofactor.

The protein resides in the cytoplasm. The catalysed reaction is (7R,8S)-7,8-diammoniononanoate + CO2 + ATP = (4R,5S)-dethiobiotin + ADP + phosphate + 3 H(+). The protein operates within cofactor biosynthesis; biotin biosynthesis; biotin from 7,8-diaminononanoate: step 1/2. Catalyzes a mechanistically unusual reaction, the ATP-dependent insertion of CO2 between the N7 and N8 nitrogen atoms of 7,8-diaminopelargonic acid (DAPA, also called 7,8-diammoniononanoate) to form a ureido ring. The sequence is that of ATP-dependent dethiobiotin synthetase BioD from Halalkalibacterium halodurans (strain ATCC BAA-125 / DSM 18197 / FERM 7344 / JCM 9153 / C-125) (Bacillus halodurans).